The sequence spans 229 residues: Clathrin light chain (229 aa).

2 disordered regions span residues 1–24 (MSQF…DSKN) and 76–132 (EMQA…KLRE). Basic and acidic residues predominate over residues 107–132 (EPVRKWKEDQMKRIQERDESSKKLRE). Ser-229 is modified (phosphoserine).

It belongs to the clathrin light chain family. Clathrin coats are formed from molecules containing 3 heavy chains and 3 light chains.

Its subcellular location is the cytoplasmic vesicle membrane. The protein resides in the membrane. It is found in the coated pit. Functionally, clathrin is the major protein of the polyhedral coat of coated pits and vesicles. This Schizosaccharomyces pombe (strain 972 / ATCC 24843) (Fission yeast) protein is Clathrin light chain (clc1).